A 327-amino-acid polypeptide reads, in one-letter code: Polyprenyl transferase esdpC (327 aa).

The next 8 membrane-spanning stretches (helical) occupy residues 35 to 54 (YNPL…AGAS), 73 to 93 (LLVF…NDWI), 118 to 138 (EALI…AYTL), 140 to 160 (GHNV…YPFG), 171 to 191 (YPQY…WLAI), 202 to 222 (IMES…LNTA), 239 to 259 (VYFL…ALVL), and 307 to 327 (ENFA…LLKS).

Belongs to the UbiA prenyltransferase family. Mg(2+) is required as a cofactor.

The protein localises to the membrane. It participates in secondary metabolite biosynthesis; terpenoid biosynthesis. Its function is as follows. olyprenyl transferase; part of the cluster that mediates the biosynthesis of shearones, diterpenoid pyrones (DPs) which are structurally diverse meroterpenoids consisting of a diterpene linked by a pyrone, and which may exhibit a range of bioactivities. Within the pathway, esdpC takes part to the biosynthesis of the molecular scaffold by catalyzing the C-3 geranylgeranylation reaction of the alpha-pyrone produced by esdpA. The molecular scaffold is commonly biosynthesized by a series of enzymes including the non-reducing polyketide synthase (NR-PKS) esdpA that generates an alpha-pyrone; the prenyltransferase esdpC that attaches a geranylgeranyl pyrophosphate (GGPP) produced by the GGPP synthase (GGPPS) esdpD onto the pyrone unit; the FAD-dependent monooxygenase esdpE that converts an olefin on the diterpene unit into an epoxide; and the terpene cyclase esdpB that catalyzes the cyclization reactions to give the molecular backbone shearone A. In the modification steps, esdpF oxidizes the hydroxy group to a ketone at C-3 and esdpG then attaches hydroxy groups at both C-11 and C-12. After that, esdpI hydroxylates at C-20 and esdpH hydroxylates at C-6'. The ether bridge is generated by nucleophilic attack of the hydroxy group at C-20 to the carbonyl carbon at C-3. EsdpH can also functions prior to esdpI. The different combinations of these modification enzymes lead to the production of diverse shearone derivatives, shearone I being the end product of the pathway. The alpha-ketoglutarate-dependent dioxygenase esdpJ seems not to be involved in this pathway. This Penicillium shearii (Eupenicillium shearii) protein is Polyprenyl transferase esdpC.